The sequence spans 360 residues: Phospho-N-acetylmuramoyl-pentapeptide-transferase (360 aa).

Transmembrane regions (helical) follow at residues 27 to 47 (GALI…INSL), 71 to 91 (TPTM…LLWA), 93 to 113 (LSSI…SIGF), 134 to 154 (LGLE…NGQA), 168 to 188 (FIIN…VGAG), 199 to 219 (GLAI…AYLS), 239 to 259 (LAVV…FNAP), 262 to 282 (AIFM…TVAV), 288 to 308 (IVLV…IIQV), and 337 to 357 (QVVI…LSTL).

Belongs to the glycosyltransferase 4 family. MraY subfamily. Mg(2+) is required as a cofactor.

It localises to the cell inner membrane. The catalysed reaction is UDP-N-acetyl-alpha-D-muramoyl-L-alanyl-gamma-D-glutamyl-meso-2,6-diaminopimeloyl-D-alanyl-D-alanine + di-trans,octa-cis-undecaprenyl phosphate = di-trans,octa-cis-undecaprenyl diphospho-N-acetyl-alpha-D-muramoyl-L-alanyl-D-glutamyl-meso-2,6-diaminopimeloyl-D-alanyl-D-alanine + UMP. Its pathway is cell wall biogenesis; peptidoglycan biosynthesis. In terms of biological role, catalyzes the initial step of the lipid cycle reactions in the biosynthesis of the cell wall peptidoglycan: transfers peptidoglycan precursor phospho-MurNAc-pentapeptide from UDP-MurNAc-pentapeptide onto the lipid carrier undecaprenyl phosphate, yielding undecaprenyl-pyrophosphoryl-MurNAc-pentapeptide, known as lipid I. The chain is Phospho-N-acetylmuramoyl-pentapeptide-transferase from Mesorhizobium japonicum (strain LMG 29417 / CECT 9101 / MAFF 303099) (Mesorhizobium loti (strain MAFF 303099)).